The primary structure comprises 299 residues: Bifunctional phosphoglucose/phosphomannose isomerase (299 aa).

The SIS domain maps to 27 to 177; sequence DEVEITPSSR…IHKLMEDFQK (151 aa). D-fructose 6-phosphate contacts are provided by Gly44, Ser45, Ser84, Ser86, Thr89, and Arg132. The active-site Proton acceptor is the Glu200. Residues His216 and Lys295 each coordinate D-fructose 6-phosphate. The active-site Proton donor is the His216. Catalysis depends on Lys295, which acts as the Proton acceptor.

Belongs to the PGI/PMI family. Homodimer.

The catalysed reaction is alpha-D-glucose 6-phosphate = beta-D-fructose 6-phosphate. It catalyses the reaction D-mannose 6-phosphate = D-fructose 6-phosphate. With respect to regulation, presence or absence of metal ions or EDTA does not significantly affect the phosphoglucose isomerase activity. Functionally, dual specificity isomerase that catalyzes the isomerization of both glucose-6-phosphate and mannose-6-phosphate to fructose-6-phosphate with nearly similar catalytic efficiency. Also catalyzes the epimerization of mannose 6-phosphate to glucose 6-phosphate but the rate of epimerization reaction is 20-fold lower than that of isomerization reaction. The chain is Bifunctional phosphoglucose/phosphomannose isomerase from Pyrobaculum calidifontis (strain DSM 21063 / JCM 11548 / VA1).